Reading from the N-terminus, the 387-residue chain is 3-ketoacyl-CoA thiolase (387 aa).

The Acyl-thioester intermediate role is filled by C91. Residues H343 and C373 each act as proton acceptor in the active site.

It belongs to the thiolase-like superfamily. Thiolase family. As to quaternary structure, heterotetramer of two alpha chains (FadB) and two beta chains (FadA).

It localises to the cytoplasm. It carries out the reaction an acyl-CoA + acetyl-CoA = a 3-oxoacyl-CoA + CoA. It participates in lipid metabolism; fatty acid beta-oxidation. In terms of biological role, catalyzes the final step of fatty acid oxidation in which acetyl-CoA is released and the CoA ester of a fatty acid two carbons shorter is formed. In Yersinia enterocolitica serotype O:8 / biotype 1B (strain NCTC 13174 / 8081), this protein is 3-ketoacyl-CoA thiolase.